Consider the following 677-residue polypeptide: DNA gyrase subunit B, novobiocin-resistant (677 aa).

The interval 1-23 is disordered; that stretch reads MTTYDTRTATDTRGSEQPGHVGT. The novobiocin-binding stretch occupies residues 154 to 295; sequence IWTDGHRWTQ…RLLSAEIALQ (142 aa). Positions 456–570 constitute a Toprim domain; that stretch reads SEIFIVEGDS…EGHVHLSRPP (115 aa). The Mg(2+) site is built by E462, D535, and D537.

Belongs to the type II topoisomerase GyrB family. Heterotetramer, composed of two GyrA and two GyrB chains. In the heterotetramer, GyrA contains the active site tyrosine that forms a transient covalent intermediate with DNA, while GyrB binds cofactors and catalyzes ATP hydrolysis. The cofactor is Mg(2+). Requires Mn(2+) as cofactor. It depends on Ca(2+) as a cofactor.

The protein localises to the cytoplasm. It catalyses the reaction ATP-dependent breakage, passage and rejoining of double-stranded DNA.. In terms of biological role, a type II topoisomerase that negatively supercoils closed circular double-stranded (ds) DNA in an ATP-dependent manner to modulate DNA topology and maintain chromosomes in an underwound state. Negative supercoiling favors strand separation, and DNA replication, transcription, recombination and repair, all of which involve strand separation. Also able to catalyze the interconversion of other topological isomers of dsDNA rings, including catenanes and knotted rings. Type II topoisomerases break and join 2 DNA strands simultaneously in an ATP-dependent manner. The chain is DNA gyrase subunit B, novobiocin-resistant from Streptomyces niveus (Streptomyces spheroides).